Consider the following 194-residue polypeptide: ATP-dependent Clp protease proteolytic subunit (194 aa).

The Nucleophile role is filled by Ser-98. His-123 is an active-site residue.

It belongs to the peptidase S14 family. Fourteen ClpP subunits assemble into 2 heptameric rings which stack back to back to give a disk-like structure with a central cavity, resembling the structure of eukaryotic proteasomes.

The protein resides in the cytoplasm. The enzyme catalyses Hydrolysis of proteins to small peptides in the presence of ATP and magnesium. alpha-casein is the usual test substrate. In the absence of ATP, only oligopeptides shorter than five residues are hydrolyzed (such as succinyl-Leu-Tyr-|-NHMec, and Leu-Tyr-Leu-|-Tyr-Trp, in which cleavage of the -Tyr-|-Leu- and -Tyr-|-Trp bonds also occurs).. In terms of biological role, cleaves peptides in various proteins in a process that requires ATP hydrolysis. Has a chymotrypsin-like activity. Plays a major role in the degradation of misfolded proteins. This is ATP-dependent Clp protease proteolytic subunit from Syntrophotalea carbinolica (strain DSM 2380 / NBRC 103641 / GraBd1) (Pelobacter carbinolicus).